Consider the following 198-residue polypeptide: Large ribosomal subunit protein eL18 (198 aa).

The disordered stretch occupies residues 157-198; sequence RHFGASGVPGSHSKPYATNRGKETKRGRRTGRSYKRKAFRHV. The span at 179–198 shows a compositional bias: basic residues; sequence ETKRGRRTGRSYKRKAFRHV.

This sequence belongs to the eukaryotic ribosomal protein eL18 family.

It localises to the cytoplasm. This Leishmania major protein is Large ribosomal subunit protein eL18 (RPL18-A).